A 584-amino-acid polypeptide reads, in one-letter code: Kelch domain-containing protein 4 (584 aa).

A compositionally biased stretch (basic residues) spans 1-10 (MGKKGKKEKK). 2 disordered regions span residues 1–33 (MGKK…RKEE) and 50–69 (KTQV…NASL). Basic and acidic residues predominate over residues 11 to 24 (GRGAEKTAAKMEKK). Kelch repeat units follow at residues 77–129 (ELIL…VVPQ), 133–187 (QLWV…AWKR), 188–238 (QLIL…LMAV), 243–289 (SIAI…INPS), and 308–361 (QILV…RRGK). Disordered regions lie at residues 348–381 (KGPK…APEP), 405–433 (SGLG…CPRS), and 482–533 (PKSQ…EQFE). Ser418 carries the post-translational modification Phosphoserine. A Kelch 6 repeat occupies 443 to 494 (LLYVYGGMFEAGDRQVTLSDLYCLDLHKMEEWKTLVEMDPKSQEWLEESDSE). A compositionally biased stretch (acidic residues) spans 487-519 (WLEESDSEEDSSSDEESEDGEDKDQEDSAEEGA). Positions 520-533 (DPQHPEVARGEQFE) are enriched in basic and acidic residues.

The sequence is that of Kelch domain-containing protein 4 (Klhdc4) from Mus musculus (Mouse).